Consider the following 389-residue polypeptide: Diaminopimelate decarboxylase (389 aa).

The residue at position 58 (Lys58) is an N6-(pyridoxal phosphate)lysine. Residues Gly233 and 271-274 contribute to the pyridoxal 5'-phosphate site; that span reads ELGR. Substrate-binding residues include Arg274, Arg310, Tyr314, Glu342, and Tyr370. Position 370 (Tyr370) interacts with pyridoxal 5'-phosphate.

The protein belongs to the Orn/Lys/Arg decarboxylase class-II family. LysA subfamily. In terms of assembly, homodimer. It depends on pyridoxal 5'-phosphate as a cofactor.

The catalysed reaction is meso-2,6-diaminopimelate + H(+) = L-lysine + CO2. It functions in the pathway amino-acid biosynthesis; L-lysine biosynthesis via DAP pathway; L-lysine from DL-2,6-diaminopimelate: step 1/1. In terms of biological role, specifically catalyzes the decarboxylation of meso-diaminopimelate (meso-DAP) to L-lysine. This Francisella tularensis subsp. holarctica (strain LVS) protein is Diaminopimelate decarboxylase.